Reading from the N-terminus, the 403-residue chain is Phosphopentomutase (403 aa).

Positions 13, 298, 303, 339, 340, and 351 each coordinate Mn(2+).

This sequence belongs to the phosphopentomutase family. Requires Mn(2+) as cofactor.

It is found in the cytoplasm. The enzyme catalyses 2-deoxy-alpha-D-ribose 1-phosphate = 2-deoxy-D-ribose 5-phosphate. The catalysed reaction is alpha-D-ribose 1-phosphate = D-ribose 5-phosphate. The protein operates within carbohydrate degradation; 2-deoxy-D-ribose 1-phosphate degradation; D-glyceraldehyde 3-phosphate and acetaldehyde from 2-deoxy-alpha-D-ribose 1-phosphate: step 1/2. Functionally, isomerase that catalyzes the conversion of deoxy-ribose 1-phosphate (dRib-1-P) and ribose 1-phosphate (Rib-1-P) to deoxy-ribose 5-phosphate (dRib-5-P) and ribose 5-phosphate (Rib-5-P), respectively. This chain is Phosphopentomutase, found in Streptococcus gordonii (strain Challis / ATCC 35105 / BCRC 15272 / CH1 / DL1 / V288).